A 283-amino-acid chain; its full sequence is Dihydropteroate synthase (283 aa).

The 257-residue stretch at 18 to 274 folds into the Pterin-binding domain; it reads PKIMGIVNLT…DVKATADALK (257 aa). A Mg(2+)-binding site is contributed by Asn25. (7,8-dihydropterin-6-yl)methyl diphosphate is bound by residues Thr66, Asp99, Asn119, Asp190, Lys227, and 262 to 264; that span reads RVH.

It belongs to the DHPS family. As to quaternary structure, homodimer. Mg(2+) serves as cofactor.

It carries out the reaction (7,8-dihydropterin-6-yl)methyl diphosphate + 4-aminobenzoate = 7,8-dihydropteroate + diphosphate. It functions in the pathway cofactor biosynthesis; tetrahydrofolate biosynthesis; 7,8-dihydrofolate from 2-amino-4-hydroxy-6-hydroxymethyl-7,8-dihydropteridine diphosphate and 4-aminobenzoate: step 1/2. Its function is as follows. Catalyzes the condensation of para-aminobenzoate (pABA) with 6-hydroxymethyl-7,8-dihydropterin diphosphate (DHPt-PP) to form 7,8-dihydropteroate (H2Pte), the immediate precursor of folate derivatives. This chain is Dihydropteroate synthase (folP), found in Neisseria meningitidis serogroup C.